The sequence spans 255 residues: Large ribosomal subunit protein uL4 (255 aa).

It belongs to the universal ribosomal protein uL4 family. In terms of assembly, part of the 50S ribosomal subunit.

In terms of biological role, one of the primary rRNA binding proteins, this protein initially binds near the 5'-end of the 23S rRNA. It is important during the early stages of 50S assembly. It makes multiple contacts with different domains of the 23S rRNA in the assembled 50S subunit and ribosome. Functionally, forms part of the polypeptide exit tunnel. The chain is Large ribosomal subunit protein uL4 from Pyrococcus furiosus (strain ATCC 43587 / DSM 3638 / JCM 8422 / Vc1).